The sequence spans 511 residues: Exodeoxyribonuclease 7 large subunit (511 aa).

It belongs to the XseA family. Heterooligomer composed of large and small subunits.

The protein localises to the cytoplasm. It catalyses the reaction Exonucleolytic cleavage in either 5'- to 3'- or 3'- to 5'-direction to yield nucleoside 5'-phosphates.. Its function is as follows. Bidirectionally degrades single-stranded DNA into large acid-insoluble oligonucleotides, which are then degraded further into small acid-soluble oligonucleotides. This chain is Exodeoxyribonuclease 7 large subunit, found in Brucella melitensis biotype 2 (strain ATCC 23457).